The following is a 238-amino-acid chain: uncharacterized protein (238 aa).

7 helical membrane passes run 19 to 39 (FIYG…LLGW), 64 to 84 (WSVI…IYNW), 85 to 105 (QVLY…YFTK), 112 to 132 (LWND…SYYF), 141 to 161 (ILWV…YVKS), 176 to 196 (VIFH…ILAL), and 218 to 238 (VGLI…VATL).

The protein to B.subtilis YwiC.

The protein resides in the cell membrane. This is an uncharacterized protein from Haemophilus influenzae (strain ATCC 51907 / DSM 11121 / KW20 / Rd).